The following is a 962-amino-acid chain: SH3 domain-binding protein 4 (962 aa).

The 60-residue stretch at Gly55 to Tyr114 folds into the SH3 1 domain. 5 positions are modified to phosphoserine: Ser131, Ser245, Ser250, Ser278, and Ser295. The region spanning Thr316–Val453 is the ZU5 domain. Ser636 bears the Phosphoserine mark. Positions Ser653–Lys723 constitute an SH3 2 domain.

As to quaternary structure, homodimer or homooligomer. Interacts with DNM2, EPS15, clathrin, the adapter protein complex 2/AP-2 and TFRC. Interacts with the Rag GTPases RRAGA, RRAGB, RRAGC and RRAGD; the interaction is most probably direct, preferentially occurs with their inactive GDP-bound form and is negatively regulated by amino acids. In terms of processing, phosphorylated upon EGF stimulation. Phosphorylation prevents interaction with DNM2.

The protein localises to the membrane. Its subcellular location is the clathrin-coated pit. It is found in the cytoplasmic vesicle. It localises to the clathrin-coated vesicle. The protein resides in the nucleus. In terms of biological role, may function in transferrin receptor internalization at the plasma membrane through a cargo-specific control of clathrin-mediated endocytosis. Alternatively, may act as a negative regulator of the amino acid-induced TOR signaling by inhibiting the formation of active Rag GTPase complexes. Preferentially binds inactive Rag GTPase complexes and prevents their interaction with the mTORC1 complex inhibiting its relocalization to lysosomes and its activation. Thereby, may indirectly regulate cell growth, proliferation and autophagy. The polypeptide is SH3 domain-binding protein 4 (Sh3bp4) (Mus musculus (Mouse)).